The chain runs to 40 residues: Photosystem II reaction center protein J (40 aa).

A helical transmembrane segment spans residues 8 to 28 (IPLWIIGTVAGIVVIGLIGLF).

This sequence belongs to the PsbJ family. In terms of assembly, PSII is composed of 1 copy each of membrane proteins PsbA, PsbB, PsbC, PsbD, PsbE, PsbF, PsbH, PsbI, PsbJ, PsbK, PsbL, PsbM, PsbT, PsbX, PsbY, PsbZ, Psb30/Ycf12, at least 3 peripheral proteins of the oxygen-evolving complex and a large number of cofactors. It forms dimeric complexes.

It is found in the plastid. It localises to the chloroplast thylakoid membrane. In terms of biological role, one of the components of the core complex of photosystem II (PSII). PSII is a light-driven water:plastoquinone oxidoreductase that uses light energy to abstract electrons from H(2)O, generating O(2) and a proton gradient subsequently used for ATP formation. It consists of a core antenna complex that captures photons, and an electron transfer chain that converts photonic excitation into a charge separation. The protein is Photosystem II reaction center protein J of Pisum sativum (Garden pea).